A 147-amino-acid polypeptide reads, in one-letter code: UPF0251 protein NT01CX_1491 (147 aa).

It belongs to the UPF0251 family.

In Clostridium novyi (strain NT), this protein is UPF0251 protein NT01CX_1491.